A 229-amino-acid chain; its full sequence is Non-structural protein P8 (229 aa).

Helical transmembrane passes span 119 to 139 (IIHMTLLIAAVVALLTSVCTL) and 162 to 182 (SLNPMLGVVNLGATFLMMVCA).

This sequence belongs to the orbivirus NS3 family. Forms homooligomers via coiled-coil motif. Interacts with host OPTN; this interaction inhibits innate immune response.

The protein localises to the host cell membrane. Its subcellular location is the host Golgi apparatus. In terms of biological role, plays a role in the inhibition of host innate immune response. Interacts with host OPTN and thus inhibits the recruitment of TBK1 to the host Golgi apparatus. In turn, downstream partner IRF3 cannot be activated and IFN-beta production is impaired. Functionally, facilitates viral particle release either by increasing plasma membrane permeability through a viroporin-like activity or by viral budding. The chain is Non-structural protein P8 (Segment-10) from Bluetongue virus 17 (isolate USA) (BTV 17).